Here is a 520-residue protein sequence, read N- to C-terminus: Succinyl-CoA:3-ketoacid coenzyme A transferase 2A, mitochondrial (520 aa).

The N-terminal 39 residues, 1–39, are a transit peptide targeting the mitochondrion; it reads MAALRLLAWALPRGVSALRPPPALPHRLIRRYVSDRSGS. The segment at 280 to 299 is disordered; sequence ERLTTRDSKPAPGSKDNDPS. Glu342 functions as the 5-glutamyl coenzyme A thioester intermediate in the catalytic mechanism.

The protein belongs to the 3-oxoacid CoA-transferase family. In terms of assembly, homodimer.

It localises to the mitochondrion. The catalysed reaction is a 3-oxo acid + succinyl-CoA = a 3-oxoacyl-CoA + succinate. It functions in the pathway ketone metabolism; succinyl-CoA degradation; acetoacetyl-CoA from succinyl-CoA: step 1/1. Its function is as follows. Key enzyme for ketone body catabolism. Transfers the CoA moiety from succinate to acetoacetate. Formation of the enzyme-CoA intermediate proceeds via an unstable anhydride species formed between the carboxylate groups of the enzyme and substrate. Probably play and important roles in the energy metabolism of spermatozoa. This is Succinyl-CoA:3-ketoacid coenzyme A transferase 2A, mitochondrial (Oxct2a) from Mus musculus (Mouse).